A 473-amino-acid chain; its full sequence is MLRCAVKKFAYFATFLTIVANIYIYTYPSFHPEQCSWNCSNKNAPLQKDLTFVDKVKNYFSDVREQWHGSHASAGNDEDIHILAFGDPQIKGIWPKTPYVSRLDTYGNDYYLGHIYDMMQQRLKPQVVTVMGDLFSSQWIGDSEFHNRTKRYISRIFKRDPTSIENIKQQNLDEKGQYKANWPEWGDRFNEILDNVKENEADNQELSFGFGYENIHSWNPDLEDFLIINITGNHDVGYSGDATYQHMTRFHDLFGKDNYWIEYETNTTHPWRIVVLNDLLLEGPALQPEFVEATWIFLNQLNERKFNGSTVLLTHVPFYKREGLCVDGPDTRYYPDAHAPESYKSGLLRSQNHLSESVSNQVLNMIFENGKPGIILTGHDHEGCETVYNKKSTSTWEATKNIESDVFVKEITVKSMMGEFNGNTGLVTGHFNTDSMTWEWTFSLCPFAIQHVWWFAKVSLLVTIFTWSSLLFV.

The Cytoplasmic portion of the chain corresponds to 1–8 (MLRCAVKK). Residues 9 to 29 (FAYFATFLTIVANIYIYTYPS) form a helical membrane-spanning segment. Residues 30–451 (FHPEQCSWNC…FSLCPFAIQH (422 aa)) are Lumenal-facing. N-linked (GlcNAc...) asparagine glycans are attached at residues Asn38, Asn147, Asn229, Asn266, and Asn307. The chain crosses the membrane as a helical span at residues 452-472 (VWWFAKVSLLVTIFTWSSLLF). Residue Val473 is a topological domain, cytoplasmic.

N-glycosylated.

The protein resides in the endoplasmic reticulum membrane. In terms of biological role, acts together with EMP24 and ERV25 in cargo exit from the endoplasmic reticulum. The polypeptide is Protein TED1 (TED1) (Saccharomyces cerevisiae (strain ATCC 204508 / S288c) (Baker's yeast)).